Reading from the N-terminus, the 639-residue chain is Protein P1 (639 aa).

The N-terminal stretch at 1-20 is a signal peptide; sequence MNRFTAYAALFFMFSLCSTA. Transmembrane regions (helical) follow at residues 121–141, 144–164, and 172–192; these read AASV…WTLA, ITLF…LGCI, and ALSL…KIIW. Residues 207–399 enclose the Peptidase S39 domain; it reads VEGYKGFSVP…GITSPNYVFE (193 aa). Residues H255, D286, and S354 each act as for protease activity in the active site. Disordered stretches follow at residues 455-515 and 539-639; these read ATNA…PPMD and VSRV…NSKA. The span at 463-488 shows a compositional bias: polar residues; the sequence is TAQTNSAEKTAPSTSAEKTALTNKPL. Residues 548-561 are compositionally biased toward basic residues; sequence QKPKQKKRGRRGGK. A compositionally biased stretch (polar residues) spans 566–577; that stretch reads SLPPTSTQSTSG. Positions 587-602 are enriched in low complexity; the sequence is ASGSAGTSRATTTPAP.

The protein belongs to the peptidase S39B family. Specific enzymatic cleavages in vivo yield mature proteins. The protease probably cleaves itself and releases the VPg protein. The VPg protein is probably further cleaved in its C-terminus.

It localises to the membrane. Functionally, precursor from which the VPg molecule is probably released at the onset of the RNA synthesis. Essential for virus replication. Participates, together with the proteins P0 and P7, in the inhibition of the induction of aphid-induced host phytohormones. This could play a role in the attraction to the infected plants by aphids. The protein is Protein P1 of Solanum tuberosum (Potato).